We begin with the raw amino-acid sequence, 634 residues long: Factor of DNA methylation 1 (634 aa).

Residues 288 to 469 (LDEKKNLHQA…LESMNSVLMT (182 aa)) are a coiled coil. Over residues 349 to 364 (ELDRQKLDEDKRKSDA) the composition is skewed to basic and acidic residues. The interval 349-375 (ELDRQKLDEDKRKSDAMNKSLQLASRE) is disordered.

Homodimer. Interacts with IDN2 and AGO4. Forms a complex with IDN2 and FMD2/INDL2. As to expression, highly expressed in flowers and at lower levels in roots, leaves and stems.

Functionally, forms a complex with IDN2 and FDM2/IDNL2 that is required for RNA-directed DNA methylation (RdDM) and that functions at a downstream step of the RdDM pathway. Required for de novo DNA methylation and 24 nucleotide small interfering RNA (siRNA) accumulation. Binds unmethylated but not methylated DNAs through its coiled-coil domain. May bind double-stranded RNAs (dsRNAs) with 5'-overhangs through its XS domain. However, according to, FMD1 does not bind dsRNAs. This Arabidopsis thaliana (Mouse-ear cress) protein is Factor of DNA methylation 1.